The sequence spans 361 residues: Prostaglandin D2 receptor (361 aa).

Residues Met1–Thr21 lie on the Extracellular side of the membrane. An N-linked (GlcNAc...) asparagine glycan is attached at Asn10. Residues Met22–Ala42 form a helical membrane-spanning segment. The Cytoplasmic segment spans residues Arg43 to Pro58. A helical membrane pass occupies residues Ser59–Val79. Residues Ser80–Ala107 are Extracellular-facing. An N-linked (GlcNAc...) asparagine glycan is attached at Asn90. Cysteines 105 and 183 form a disulfide. A helical transmembrane segment spans residues Phe108–Leu128. At Glu129–Ala150 the chain is on the cytoplasmic side. The chain crosses the membrane as a helical span at residues Met151–Phe171. The Extracellular segment spans residues Gly172–Ser195. A helical transmembrane segment spans residues Val196 to Leu216. Over Cys217–Asp262 the chain is Cytoplasmic. A helical membrane pass occupies residues His263–Tyr283. At Arg284–Arg310 the chain is on the extracellular side. N-linked (GlcNAc...) asparagine glycosylation is present at Asn297. The helical transmembrane segment at Phe311–Phe331 threads the bilayer. The Cytoplasmic segment spans residues Arg332–Leu361.

It belongs to the G-protein coupled receptor 1 family.

Its subcellular location is the cell membrane. Its function is as follows. Receptor for prostaglandin D2 (PGD2). The activity of this receptor is mainly mediated by G(s) proteins that stimulate adenylate cyclase, resulting in an elevation of intracellular cAMP. A mobilization of calcium is also observed, but without formation of inositol 1,4,5-trisphosphate. Involved in PLA2G3-dependent maturation of mast cells. PLA2G3 is secreted by immature mast cells and acts on nearby fibroblasts upstream to PTDGS to synthesize PGD2, which in turn promotes mast cell maturation and degranulation via PTGDR. This Bos taurus (Bovine) protein is Prostaglandin D2 receptor (PTGDR).